The chain runs to 141 residues: HTH-type transcriptional repressor NsrR (141 aa).

Residues 2–129 (QLTSFTDYAL…DDCTIEELLS (128 aa)) enclose the HTH rrf2-type domain. A DNA-binding region (H-T-H motif) is located at residues 28–51 (ITEVTDLFGVSRNHMVKVINRLGQ). Residues Cys-91, Cys-96, and Cys-102 each coordinate [2Fe-2S] cluster.

Requires [2Fe-2S] cluster as cofactor.

Nitric oxide-sensitive repressor of genes involved in protecting the cell against nitrosative stress. May require iron for activity. The protein is HTH-type transcriptional repressor NsrR of Vibrio campbellii (strain ATCC BAA-1116).